Reading from the N-terminus, the 582-residue chain is Multicopper oxidase LPR1 homolog 1 (582 aa).

Residues M1–G20 form the signal peptide. The Cu cation site is built by H150, H152, H198, and H200. Residues N256, N300, and N308 are each glycosylated (N-linked (GlcNAc...) asparagine). Residues P285 to T354 enclose the Plastocyanin-like domain. Cu cation contacts are provided by H467, H470, and H472. N-linked (GlcNAc...) asparagine glycosylation occurs at N504. Cu cation contacts are provided by H563, C564, H565, H569, and M574.

This sequence belongs to the multicopper oxidase family. The cofactor is Cu cation. As to expression, highly expressed in roots, and at lower levels in basal stems and leaf blades.

Its subcellular location is the endoplasmic reticulum membrane. Functionally, multicopper oxidase that may play a role in the maintenance of inorganic phosphate homeostasis. The polypeptide is Multicopper oxidase LPR1 homolog 1 (Oryza sativa subsp. japonica (Rice)).